The following is an 80-amino-acid chain: Putative membrane protein insertion efficiency factor (80 aa).

The protein belongs to the UPF0161 family.

Its subcellular location is the cell membrane. Could be involved in insertion of integral membrane proteins into the membrane. The chain is Putative membrane protein insertion efficiency factor from Corynebacterium jeikeium (strain K411).